Consider the following 479-residue polypeptide: MGKGQSKIKNGGSGKPAKAGKPKKGNKNDETTPTSTPTPTPTPTQQNLDNSAQQQQQQQQTTTAAVSLDNKEQQQQQNIPAPATQTPITQTGTPTIEESQKNTDNNNINGASNEASSSPDSPNGSGNGNDDEDEGPEEVIFSKNKQSATKDDFELLNVIGKGSFGKVMQVKKKGEDKIFAMKVLRKDAIIARKQVNHTKSEKTILQCISHPFIVNLHYAFQTKDKLYMVLDFVNGGELFFHLKREGRFSEPRVKIYAAEIVSALDHLHKQDIVYRDLKPENILLDSEGHICITDFGLSKKIETTDGTFTFCGTPEYLAPEVLNGHGHGCAVDWWSLGTLLYEMLTGLPPFYSQNVSTMYQKILNGELKIPTYISPEAKSLLEGLLTREVDKRLGTKGGGEVKQHPWFKNIDWEKLDRKEVEVHFKPKVKSGTDISQIDPVFTQERPMDSLVETSALGDAMGKDTSFEGFTYVADSILKD.

A disordered region spans residues Met1–Pro136. 2 stretches are compositionally biased toward low complexity: residues Ala52–Ala65 and Ile79–Ile96. Residues Asn102 to Ala115 show a composition bias toward polar residues. In terms of domain architecture, Protein kinase spans Phe153–Phe407. ATP is bound by residues Ile159–Val167 and Lys182. The Proton acceptor role is filled by Asp276. Phosphothreonine; by autocatalysis is present on Thr309. Residues Lys408 to Asp479 enclose the AGC-kinase C-terminal domain. Thr470 bears the Phosphothreonine mark.

It belongs to the protein kinase superfamily. AGC Ser/Thr protein kinase family. S6 kinase subfamily. In terms of processing, seems to be myristoylated.

It localises to the cytoplasm. Its subcellular location is the cell membrane. The catalysed reaction is L-seryl-[protein] + ATP = O-phospho-L-seryl-[protein] + ADP + H(+). It carries out the reaction L-threonyl-[protein] + ATP = O-phospho-L-threonyl-[protein] + ADP + H(+). Functionally, required for morphogenesis during multicellular development. Phosphorylates talB, gefN, gefS, PI4P 5-kinase and gacQ. This chain is Protein kinase 2 (pkgB), found in Dictyostelium discoideum (Social amoeba).